The primary structure comprises 357 residues: F-box only protein 25 (357 aa).

Positions 1–83 are interaction with beta-actin; the sequence is MPFLGQDWRS…DTAAHSFYRE (83 aa). Residues 224 to 271 form the F-box domain; the sequence is GLTLSDLPLHMLNNILYRFSDGWDIVTLGQVTPTLYMLSEDRRLWKRL.

As to quaternary structure, part of a SCF (SKP1-cullin-F-box) protein ligase complex consisting of FBXO25, SKP1, CUL1 and RBX1. Interacts directly with SKP1 and CUL1. Interacts (via C-terminus) with actin (via N-terminus).

The protein localises to the nucleus. The protein operates within protein modification; protein ubiquitination. Its function is as follows. Substrate-recognition component of the SCF (SKP1-CUL1-F-box protein)-type E3 ubiquitin ligase complex. May play a role in accumulation of expanded polyglutamine (polyQ) protein huntingtin (HTT). The chain is F-box only protein 25 (Fbxo25) from Rattus norvegicus (Rat).